Reading from the N-terminus, the 71-residue chain is MPSVKLKENEPFDVALRRFKRSCEKAGVLAEVRRREFYEKPTSVRKRKAAAAVKRHAKKVQRENRKFQRLY.

The span at 48-59 (KAAAAVKRHAKK) shows a compositional bias: basic residues. The disordered stretch occupies residues 48–71 (KAAAAVKRHAKKVQRENRKFQRLY). Over residues 60 to 71 (VQRENRKFQRLY) the composition is skewed to basic and acidic residues.

Belongs to the bacterial ribosomal protein bS21 family.

The sequence is that of Small ribosomal subunit protein bS21 from Saccharophagus degradans (strain 2-40 / ATCC 43961 / DSM 17024).